A 581-amino-acid chain; its full sequence is MAASGRGLCKAVAASPFPAWRRDNTEARGGLKPEYDAVVIGAGHNGLVAAAYLQRLGVNTAVFERRHVIGGAAVTEEIIPGFKFSRASYLLSLLRPQIYTDLELKKHGLRLHLRNPYSFTPMLEEGAGSKVPRCLLLGTDMAENQKQIAQFSQKDAQVFPKYEEFMHRLALAIDPLLDAAPVDMAAFQHGSLLQRMRSLSTLKPLLKAGRILGAQLPRYYEVLTAPITKVLDQWFESEPLKATLATDAVIGAMTSPHTPGSGYVLLHHVMGGLEGMQGAWGYVQGGMGALSDAIASSATTHGASIFTEKTVAKVQVNSEGCVQGVVLEDGTEVRSKMVLSNTSPQITFLKLTPQEWLPEEFLERISQLDTRSPVTKINVAVDRLPSFLAAPNAPRGQPLPHHQCSIHLNCEDTLLLHQAFEDAMDGLPSHRPVIELCIPSSLDPTLAPPGCHVVSLFTQYMPYTLAGGKAWDEQERDAYADRVFDCIEVYAPGFKDSVVGRDILTPPDLERIFGLPGGNIFHCAMSLDQLYFARPVPLHSGYRCPLQGLYLCGSGAHPGGGVMGAAGRNAAHVAFRDLKSM.

38–71 (VVIGAGHNGLVAAAYLQRLGVNTAVFERRHVIGG) contacts FAD.

The protein belongs to the carotenoid/retinoid oxidoreductase family. As to quaternary structure, interacts with COX5B; this interaction may contribute to localize PYROXD2 to the inner face of the inner mitochondrial membrane.

The protein localises to the mitochondrion matrix. Its function is as follows. Probable oxidoreductase that may play a role as regulator of mitochondrial function. The polypeptide is Pyridine nucleotide-disulfide oxidoreductase domain-containing protein 2 (Homo sapiens (Human)).